Reading from the N-terminus, the 429-residue chain is Adenylosuccinate synthetase (429 aa).

Residues Gly12–Lys18 and Gly40–Thr42 contribute to the GTP site. Asp13 functions as the Proton acceptor in the catalytic mechanism. Mg(2+)-binding residues include Asp13 and Gly40. Residues Asp13 to Lys16, Asn38 to His41, Thr129, Arg143, Gln223, Thr238, and Arg302 each bind IMP. The active-site Proton donor is the His41. Thr298–Arg304 is a binding site for substrate. Residues Arg304, Lys330–Asp332, and Ser412–Ser414 each bind GTP.

It belongs to the adenylosuccinate synthetase family. In terms of assembly, homodimer. It depends on Mg(2+) as a cofactor.

It localises to the cytoplasm. It catalyses the reaction IMP + L-aspartate + GTP = N(6)-(1,2-dicarboxyethyl)-AMP + GDP + phosphate + 2 H(+). Its pathway is purine metabolism; AMP biosynthesis via de novo pathway; AMP from IMP: step 1/2. Plays an important role in the de novo pathway of purine nucleotide biosynthesis. Catalyzes the first committed step in the biosynthesis of AMP from IMP. This Zymomonas mobilis subsp. mobilis (strain ATCC 31821 / ZM4 / CP4) protein is Adenylosuccinate synthetase.